The primary structure comprises 734 residues: Photosystem I P700 chlorophyll a apoprotein A2 (734 aa).

Transmembrane regions (helical) follow at residues 46–69 (IFASHFGQLAIIFLWTSGNLFHVA), 135–158 (LYTGALFLLFLSAISLIGGWLHLQ), 175–199 (LNHHLSGLFGVSSLAWTGHLVHVAI), 273–291 (IAHHHLAIAILFLIAGHMY), 330–353 (IHFQLGLALASLGVITSLVAQHMY), 369–395 (AALYTHHQYIAGFIMTGAFAHGAIFFI), 417–439 (AIISHLSWASLFLGFHTLGLYVH), and 517–535 (FLVHHAIALGLHTTTLILV). Cys559 and Cys568 together coordinate [4Fe-4S] cluster. 2 helical membrane passes run 575–596 (AFYLAVFWMLNTIGWVTFYWHW) and 643–665 (LSVWAWMFLFGHLVWATGFMFLI). His654, Met662, and Tyr670 together coordinate chlorophyll a. Trp671 is a phylloquinone binding site. Residues 707 to 727 (LVGLAHFSVGYIFTYAAFLIA) form a helical membrane-spanning segment.

It belongs to the PsaA/PsaB family. The PsaA/B heterodimer binds the P700 chlorophyll special pair and subsequent electron acceptors. PSI consists of a core antenna complex that captures photons, and an electron transfer chain that converts photonic excitation into a charge separation. The eukaryotic PSI reaction center is composed of at least 11 subunits. Requires P700 is a chlorophyll a/chlorophyll a' dimer, A0 is one or more chlorophyll a, A1 is one or both phylloquinones and FX is a shared 4Fe-4S iron-sulfur center. as cofactor.

Its subcellular location is the plastid. It localises to the chloroplast thylakoid membrane. It carries out the reaction reduced [plastocyanin] + hnu + oxidized [2Fe-2S]-[ferredoxin] = oxidized [plastocyanin] + reduced [2Fe-2S]-[ferredoxin]. PsaA and PsaB bind P700, the primary electron donor of photosystem I (PSI), as well as the electron acceptors A0, A1 and FX. PSI is a plastocyanin-ferredoxin oxidoreductase, converting photonic excitation into a charge separation, which transfers an electron from the donor P700 chlorophyll pair to the spectroscopically characterized acceptors A0, A1, FX, FA and FB in turn. Oxidized P700 is reduced on the lumenal side of the thylakoid membrane by plastocyanin. This chain is Photosystem I P700 chlorophyll a apoprotein A2, found in Aethionema cordifolium (Lebanon stonecress).